Consider the following 432-residue polypeptide: D-amino acid dehydrogenase (432 aa).

3–17 (VVILGSGVVGVTSAW) is an FAD binding site.

It belongs to the DadA oxidoreductase family. The cofactor is FAD.

It catalyses the reaction a D-alpha-amino acid + A + H2O = a 2-oxocarboxylate + AH2 + NH4(+). It participates in amino-acid degradation; D-alanine degradation; NH(3) and pyruvate from D-alanine: step 1/1. In terms of biological role, oxidative deamination of D-amino acids. The sequence is that of D-amino acid dehydrogenase from Salmonella dublin (strain CT_02021853).